Reading from the N-terminus, the 381-residue chain is 3-dehydroquinate synthase (381 aa).

NAD(+) contacts are provided by residues 81 to 86, 115 to 119, 139 to 140, K152, and K161; these read EGESSK, GVIGD, and TS. E194, H256, and H274 together coordinate Zn(2+).

The protein belongs to the sugar phosphate cyclases superfamily. Dehydroquinate synthase family. Requires Co(2+) as cofactor. It depends on Zn(2+) as a cofactor. NAD(+) is required as a cofactor.

The protein resides in the cytoplasm. The enzyme catalyses 7-phospho-2-dehydro-3-deoxy-D-arabino-heptonate = 3-dehydroquinate + phosphate. The protein operates within metabolic intermediate biosynthesis; chorismate biosynthesis; chorismate from D-erythrose 4-phosphate and phosphoenolpyruvate: step 2/7. In terms of biological role, catalyzes the conversion of 3-deoxy-D-arabino-heptulosonate 7-phosphate (DAHP) to dehydroquinate (DHQ). The chain is 3-dehydroquinate synthase from Rhodopseudomonas palustris (strain TIE-1).